The chain runs to 314 residues: tRNA dimethylallyltransferase (314 aa).

10–17 (GPTAVGKT) lines the ATP pocket. 12–17 (TAVGKT) provides a ligand contact to substrate. An interaction with substrate tRNA region spans residues 35–38 (DSMQ).

The protein belongs to the IPP transferase family. Monomer. Mg(2+) is required as a cofactor.

It carries out the reaction adenosine(37) in tRNA + dimethylallyl diphosphate = N(6)-dimethylallyladenosine(37) in tRNA + diphosphate. In terms of biological role, catalyzes the transfer of a dimethylallyl group onto the adenine at position 37 in tRNAs that read codons beginning with uridine, leading to the formation of N6-(dimethylallyl)adenosine (i(6)A). In Clostridium novyi (strain NT), this protein is tRNA dimethylallyltransferase.